Here is a 267-residue protein sequence, read N- to C-terminus: Diphthine--ammonia ligase (267 aa).

A Phosphotyrosine modification is found at Y97.

It belongs to the Diphthine--ammonia ligase family.

The catalysed reaction is diphthine-[translation elongation factor 2] + NH4(+) + ATP = diphthamide-[translation elongation factor 2] + AMP + diphosphate + H(+). It participates in protein modification; peptidyl-diphthamide biosynthesis. Functionally, amidase that may catalyze the last step of diphthamide biosynthesis using ammonium and ATP. Diphthamide biosynthesis consists in the conversion of an L-histidine residue in the translation elongation factor (EEF2) to diphthamide. This Homo sapiens (Human) protein is Diphthine--ammonia ligase.